Consider the following 329-residue polypeptide: ATP-dependent (S)-NAD(P)H-hydrate dehydratase (329 aa).

A mitochondrion-targeting transit peptide spans 1–28; it reads MALGPGCRAVRGCRPVLKRAFSLHKAHS. One can recognise a YjeF C-terminal domain in the interval 35-326; the sequence is ILQLVRSVVP…AEVGPAFRRL (292 aa). Residue lysine 49 is modified to N6-acetyllysine. Tyrosine 67 carries the phosphotyrosine modification. (6S)-NADPHX-binding positions include glycine 135 and 188 to 194; that span reads NHVEFGR. Residues 228 to 232 and 247 to 256 each bind ATP; these read KGEQD and GSGRRCGGQG. A (6S)-NADPHX-binding site is contributed by aspartate 257.

The protein belongs to the NnrD/CARKD family. It depends on Mg(2+) as a cofactor.

It is found in the mitochondrion. The enzyme catalyses (6S)-NADHX + ATP = ADP + phosphate + NADH + H(+). It carries out the reaction (6S)-NADPHX + ATP = ADP + phosphate + NADPH + H(+). In terms of biological role, catalyzes the dehydration of the S-form of NAD(P)HX at the expense of ATP, which is converted to ADP. Together with NAD(P)HX epimerase, which catalyzes the epimerization of the S- and R-forms, the enzyme allows the repair of both epimers of NAD(P)HX, a damaged form of NAD(P)H that is a result of enzymatic or heat-dependent hydration. In Bos taurus (Bovine), this protein is ATP-dependent (S)-NAD(P)H-hydrate dehydratase.